The chain runs to 326 residues: CRISPR-associated endonuclease Cas1 (326 aa).

Mn(2+) contacts are provided by Glu191, His255, and Asp269.

This sequence belongs to the CRISPR-associated endonuclease Cas1 family. As to quaternary structure, homodimer. Interacts with Cas3, in the absence of crRNA. Mg(2+) serves as cofactor. The cofactor is Mn(2+).

Its function is as follows. CRISPR (clustered regularly interspaced short palindromic repeat), is an adaptive immune system that provides protection against mobile genetic elements (viruses, transposable elements and conjugative plasmids). CRISPR clusters contain sequences complementary to antecedent mobile elements and target invading nucleic acids. CRISPR clusters are transcribed and processed into CRISPR RNA (crRNA). Acts as a dsDNA endonuclease. Involved in the integration of spacer DNA into the CRISPR cassette. This is CRISPR-associated endonuclease Cas1 from Pectobacterium atrosepticum (strain SCRI 1043 / ATCC BAA-672) (Erwinia carotovora subsp. atroseptica).